We begin with the raw amino-acid sequence, 121 residues long: Protein SNORC (121 aa).

The N-terminal stretch at 1–24 (MASCLALRMALLLVSGVLAPAVLT) is a signal peptide. Topologically, residues 25–92 (DDVPQEPVPT…QGGGSLGPGA (68 aa)) are extracellular. A disordered region spans residues 28–84 (PQEPVPTLWNEPAELPSGEGPVESTSPGREPVDTGPPAPTVAPGPEDSTAQERLDQG). A helical transmembrane segment spans residues 93–113 (IAAIVIAALLATCVVLALVVV). Over 114–121 (ALRKFSAS) the chain is Cytoplasmic.

In terms of assembly, interacts (via the extracellular domain) with FGF2. Expressed in cartilage.

It localises to the membrane. The protein resides in the cytoplasm. It is found in the secreted. The protein localises to the extracellular space. Its subcellular location is the extracellular matrix. In terms of biological role, plays a role in the regulation of chondrocyte maturation and postnatal endochondral ossification. May inhibit cell growth stimulation induced by FGF2. This is Protein SNORC from Homo sapiens (Human).